A 55-amino-acid polypeptide reads, in one-letter code: Large ribosomal subunit protein bL33 (55 aa).

Belongs to the bacterial ribosomal protein bL33 family.

This Jannaschia sp. (strain CCS1) protein is Large ribosomal subunit protein bL33.